Here is a 37-residue protein sequence, read N- to C-terminus: Cytochrome b6-f complex subunit 5 (37 aa).

A helical membrane pass occupies residues 5 to 25; it reads LLSGIVLGMIPITLAGLFVTA.

It belongs to the PetG family. The 4 large subunits of the cytochrome b6-f complex are cytochrome b6, subunit IV (17 kDa polypeptide, PetD), cytochrome f and the Rieske protein, while the 4 small subunits are PetG, PetL, PetM and PetN. The complex functions as a dimer.

The protein resides in the plastid. It localises to the chloroplast thylakoid membrane. In terms of biological role, component of the cytochrome b6-f complex, which mediates electron transfer between photosystem II (PSII) and photosystem I (PSI), cyclic electron flow around PSI, and state transitions. PetG is required for either the stability or assembly of the cytochrome b6-f complex. The protein is Cytochrome b6-f complex subunit 5 of Mesostigma viride (Green alga).